Here is a 375-residue protein sequence, read N- to C-terminus: Probable RNA 3'-terminal phosphate cyclase-like protein (375 aa).

Belongs to the RNA 3'-terminal cyclase family. Type 2 subfamily.

Its subcellular location is the nucleus. The protein localises to the nucleolus. Its function is as follows. Does not have cyclase activity. Plays a role in 40S-ribosomal-subunit biogenesis in the early pre-rRNA processing steps at sites A0, A1 and A2 that are required for proper maturation of the 18S RNA. This is Probable RNA 3'-terminal phosphate cyclase-like protein from Arabidopsis thaliana (Mouse-ear cress).